The primary structure comprises 138 residues: Protein PsiE homolog (138 aa).

The next 4 helical transmembrane spans lie at 14 to 34 (LQAL…GLLI), 56 to 76 (YEML…ALII), 84 to 104 (HFPL…LIII), and 109 to 129 (AIST…FFIV).

It belongs to the PsiE family.

The protein resides in the cell membrane. The polypeptide is Protein PsiE homolog (Bacillus velezensis (strain DSM 23117 / BGSC 10A6 / LMG 26770 / FZB42) (Bacillus amyloliquefaciens subsp. plantarum)).